Here is a 363-residue protein sequence, read N- to C-terminus: uncharacterized protein (363 aa).

S-adenosyl-L-methionine is bound by residues glutamine 198, tyrosine 225, glutamate 246, and aspartate 291. Catalysis depends on cysteine 318, which acts as the Nucleophile.

This sequence belongs to the class I-like SAM-binding methyltransferase superfamily. RNA M5U methyltransferase family.

This is an uncharacterized protein from Mycoplasma mobile (strain ATCC 43663 / 163K / NCTC 11711) (Mesomycoplasma mobile).